Consider the following 411-residue polypeptide: cAMP-dependent protein kinase regulatory subunit (411 aa).

A disordered region spans residues 1-144 (MAESAFPSAQ…SWTPPYHEKT (144 aa)). The segment at 23 to 159 (AAFQKISEED…RLKTAVSSNF (137 aa)) is dimerization and phosphorylation. Residues 46–58 (SANAAAASSSTGS) show a composition bias toward low complexity. Over residues 85-96 (EEDEEGADEFPP) the composition is skewed to acidic residues. Polar residues predominate over residues 119–136 (TSVSAESLNPTSAGSDSW). Position 120 is a phosphoserine (Ser-120). 3',5'-cyclic AMP contacts are provided by residues 160-289 (LFSH…FLEE), Glu-238, Arg-247, 292-411 (LLSS…PVPA), Glu-359, and Arg-368.

Belongs to the cAMP-dependent kinase regulatory chain family. Tetramer, composed of 2 regulatory (R) and 2 catalytic (C) subunits. In the presence of cAMP it dissociates into 2 active monomeric C subunits and an R dimer.

The protein is cAMP-dependent protein kinase regulatory subunit (pkaR) of Aspergillus niger.